The sequence spans 430 residues: DNA damage-inducible protein DIN7 (430 aa).

Positions 1-96 are N-domain; sequence MGIPGLLPQL…HTETRRRKKR (96 aa). Residues Asp-30, Asp-78, Glu-150, Asp-152, Asp-171, Asp-173, and Asp-227 each contribute to the Mg(2+) site. The I-domain stretch occupies residues 114–247; sequence NAMEYFQKSV…VTAMKIVKRY (134 aa).

The protein belongs to the XPG/RAD2 endonuclease family. Requires Mg(2+) as cofactor.

It localises to the nucleus. Functionally, 5'-&gt;3' double-stranded DNA exonuclease. This is DNA damage-inducible protein DIN7 (DIN7) from Saccharomyces cerevisiae (strain ATCC 204508 / S288c) (Baker's yeast).